The chain runs to 404 residues: Glucose-1-phosphate adenylyltransferase (404 aa).

Alpha-D-glucose 1-phosphate-binding positions include Tyr99, Gly164, 179-180, and Ser197; that span reads EK.

The protein belongs to the bacterial/plant glucose-1-phosphate adenylyltransferase family.

The catalysed reaction is alpha-D-glucose 1-phosphate + ATP + H(+) = ADP-alpha-D-glucose + diphosphate. Its pathway is capsule biogenesis; capsule polysaccharide biosynthesis. It functions in the pathway glycan biosynthesis; glycogen biosynthesis. Functionally, involved in the biosynthesis of ADP-glucose, a building block, required in the biosynthesis of maltose-1-phosphate (M1P) and in the elongation reactions to produce linear alpha-1,4-glucans. Catalyzes the reaction between ATP and alpha-D-glucose 1-phosphate (G1P) to produce pyrophosphate and ADP-Glc. The chain is Glucose-1-phosphate adenylyltransferase from Mycobacterium ulcerans (strain Agy99).